We begin with the raw amino-acid sequence, 476 residues long: Glutamate--tRNA ligase (476 aa).

Positions 8 to 18 (PSPTGTLHIGT) match the 'HIGH' region motif. The 'KMSKS' region signature appears at 247–251 (KLSKR). Lys250 is a binding site for ATP.

This sequence belongs to the class-I aminoacyl-tRNA synthetase family. Glutamate--tRNA ligase type 1 subfamily. In terms of assembly, monomer.

It is found in the cytoplasm. The catalysed reaction is tRNA(Glu) + L-glutamate + ATP = L-glutamyl-tRNA(Glu) + AMP + diphosphate. Catalyzes the attachment of glutamate to tRNA(Glu) in a two-step reaction: glutamate is first activated by ATP to form Glu-AMP and then transferred to the acceptor end of tRNA(Glu). The chain is Glutamate--tRNA ligase from Synechococcus sp. (strain WH7803).